A 123-amino-acid chain; its full sequence is Preprofallaxidin-3 (123 aa).

The N-terminal stretch at 1 to 22 is a signal peptide; it reads MASLKKSLFLVLFLGLVSLSIC. Positions 23–46 are excised as a propeptide; the sequence is EEKKRENEDDAEDENHEEESEEKR. Residues 26 to 46 are disordered; it reads KRENEDDAEDENHEEESEEKR. Positions 30–42 are enriched in acidic residues; it reads EDDAEDENHEEES. Leu62 is modified (leucine amide). A propeptide spanning residues 66–70 is cleaved from the precursor; sequence SEEKR. Position 74 is a phenylalanine amide (Phe74). A propeptide spanning residues 78-82 is cleaved from the precursor; the sequence is SEEKR. At Phe88 the chain carries Phenylalanine amide. Positions 92-96 are excised as a propeptide; sequence SEEKR. Ile102 carries the post-translational modification Isoleucine amide. A propeptide spanning residues 106-110 is cleaved from the precursor; that stretch reads SEEKR. Ile116 carries the isoleucine amide modification. Residues 120 to 123 constitute a propeptide that is removed on maturation; that stretch reads KKKK.

This sequence belongs to the frog skin active peptide (FSAP) family. Brevinin subfamily. Expressed by the skin glands.

The protein localises to the secreted. Fallaxidin-1.1 shows no antibacterial activity against Gram-positive or Gram-negative bacteria. Does not inhibit the formation of NO by neuronal nitric oxide synthase. Has no effect on splenocyte proliferation or smooth muscle contraction. Functionally, fallaxidin-1.2 shows no antibacterial activity against Gram-positive or Gram-negative bacteria. Does not inhibit the formation of NO by neuronal nitric oxide synthase. Has no effect on splenocyte proliferation or smooth muscle contraction. In terms of biological role, fallaxidin-1.3 shows no antibacterial activity against Gram-positive or Gram-negative bacteria. Does not inhibit the formation of NO by neuronal nitric oxide synthase. Has no effect on splenocyte proliferation or smooth muscle contraction. Its function is as follows. Fallaxidin-3.2 shows antibacterial activity against the Gram-positive bacteria E.faecalis (MIC=100 uM) and L.lactis (MIC=500 uM). No antibacterial activity against the Gram-positive bacteria B.cereus, L.innocua, M.luteus, S.epidermidis, S.uberis and S.aureus, or the Gram-negative bacteria E.cloacae and E.coli. The sequence is that of Preprofallaxidin-3 from Litoria fallax (Eastern dwarf tree frog).